The sequence spans 515 residues: ATP synthase subunit alpha (515 aa).

171 to 178 (GDRQTGKT) is a binding site for ATP.

It belongs to the ATPase alpha/beta chains family. As to quaternary structure, F-type ATPases have 2 components, CF(1) - the catalytic core - and CF(0) - the membrane proton channel. CF(1) has five subunits: alpha(3), beta(3), gamma(1), delta(1), epsilon(1). CF(0) has three main subunits: a(1), b(2) and c(9-12). The alpha and beta chains form an alternating ring which encloses part of the gamma chain. CF(1) is attached to CF(0) by a central stalk formed by the gamma and epsilon chains, while a peripheral stalk is formed by the delta and b chains.

It localises to the cell inner membrane. It catalyses the reaction ATP + H2O + 4 H(+)(in) = ADP + phosphate + 5 H(+)(out). Its function is as follows. Produces ATP from ADP in the presence of a proton gradient across the membrane. The alpha chain is a regulatory subunit. The sequence is that of ATP synthase subunit alpha from Xanthomonas oryzae pv. oryzae (strain MAFF 311018).